We begin with the raw amino-acid sequence, 169 residues long: Ribosome maturation factor RimM (169 aa).

The 73-residue stretch at 97 to 169 (EDEYYWTDLV…TITADWGLDY (73 aa)) folds into the PRC barrel domain.

It belongs to the RimM family. In terms of assembly, binds ribosomal protein uS19.

The protein localises to the cytoplasm. In terms of biological role, an accessory protein needed during the final step in the assembly of 30S ribosomal subunit, possibly for assembly of the head region. Essential for efficient processing of 16S rRNA. May be needed both before and after RbfA during the maturation of 16S rRNA. It has affinity for free ribosomal 30S subunits but not for 70S ribosomes. The sequence is that of Ribosome maturation factor RimM from Neisseria meningitidis serogroup B (strain ATCC BAA-335 / MC58).